The following is a 429-amino-acid chain: Probable alcohol acetyltransferase orf1 (429 aa).

Belongs to the alcohol acetyltransferase FCK4 family.

Its pathway is secondary metabolite biosynthesis. Functionally, probable alcohol acetyltransferase; part of the gene cluster that mediates the biosynthesis of the glycolipid biosurfactant ustilagic acid (UA). UA is a secreted cellobiose glycolipid that is toxic for many microorganisms and confers biocontrol activity to U.maydis. UA consists of 15,16-dihydroxypalmitic or 2,15,16-trihydroxypalmitic acid, which is O-glycosidically linked to cellobiose at its terminal hydroxyl group. In addition, the cellobiose moiety is acetylated and acylated with a short-chain hydroxy fatty acid. UA biosynthesis starts with omega-hydroxylation of palmitic acid catalyzed by the cytochrome P450 monooxygenase cyp1. Terminal hydroxylation of palmitic acid precedes subterminal hydroxylation catalyzed by the cytochrome P450 monooxygenase cyp2. Sequential glucosylation of the hydroxy fatty acid is probably catalyzed by the glycosyltransferase ugt1. The cellobiose lipid is further decorated by acetylation of the proximal glucose residue and by acylation with a short-chain beta-hydroxy fatty acid at the distal glucose residue. The acyltransferase uat1 may be a good candidate for catalyzing either acetylation or acylation of the cellobiose lipid. The fatty acid synthase fas2 may be involved in synthesis of the carbon backbone of the short-chain beta-hydroxy fatty acid esterified to the cellobiose disaccharide. The secreted UA consists of a mixture of both alpha-hydroxylated and non-hydroxylated glycolipids; therefore, alpha-hydroxylation of the long-chain fatty, catalyzed by the fatty acid hydroxylase ahd1, occurs late in UA biosynthesis and may be the last step before secretion. This Mycosarcoma maydis (Corn smut fungus) protein is Probable alcohol acetyltransferase orf1.